The sequence spans 238 residues: FAVAFAAPIDDEDDKIVGGYECRKNSASYQASLQSGYHFCGGSLISSTWVVSAAHCYKSRIQVRLGEHNIAVNEGTEQFIDSVKVIMHPSYNSRNLDNDIMLIKLSKPASLNSYVSTVALPSSCASSGTRCLVSGWGNLSGSSSNYPDTLRCLDLPILSSSSCNSAYPGQITSNMFCAGFMEGGKDSCQGDSGGPVVCNGQLQGVVSWGYGCAQRNKPGVYTKVCNYRSWISSTMSSN.

The N-terminal stretch at 1 to 7 (FAVAFAA) is a signal peptide. Residues 8–15 (PIDDEDDK) constitute a propeptide, activation peptide. Positions 16–236 (IVGGYECRKN…YRSWISSTMS (221 aa)) constitute a Peptidase S1 domain. 6 disulfides stabilise this stretch: cysteine 22/cysteine 152, cysteine 40/cysteine 56, cysteine 124/cysteine 225, cysteine 131/cysteine 198, cysteine 163/cysteine 177, and cysteine 188/cysteine 212. The active-site Charge relay system is the histidine 55. Residues glutamate 67, asparagine 69, valine 72, and glutamate 77 each contribute to the Ca(2+) site. Aspartate 99 functions as the Charge relay system in the catalytic mechanism. Serine 192 acts as the Charge relay system in catalysis.

It belongs to the peptidase S1 family. The cofactor is Ca(2+).

The protein localises to the secreted. It localises to the extracellular space. The catalysed reaction is Preferential cleavage: Arg-|-Xaa, Lys-|-Xaa.. The sequence is that of Trypsin-3 from Salmo salar (Atlantic salmon).